We begin with the raw amino-acid sequence, 371 residues long: 3-methyl-D-ornithine--L-lysine ligase (371 aa).

Lys18 contacts ATP. L-lysine is bound at residue 19–20; it reads LQ. ATP is bound by residues Asp39, 57–58, and 80–81; these read NI and EN. Glu80 contributes to the L-lysine binding site. The ATP-grasp domain occupies 93–277; the sequence is EKFSCPVLFD…LIELLFRAFN (185 aa). Residues Lys112, Lys139, Ser146, and 168 to 171 each bind ADP; that span reads EEYV. Residues 177–179 and Asp233 contribute to the D-ornithine site; that span reads SLE. Residues Glu235, Glu247, and Asp249 each coordinate Mg(2+). An ADP-binding site is contributed by Glu247. D-ornithine is bound by residues 251–256 and Glu310; that span reads RFPSQT. Residues Ser254 and Glu310 each coordinate L-lysine.

It belongs to the PylC family. Mg(2+) serves as cofactor.

The enzyme catalyses (3R)-3-methyl-D-ornithine + L-lysine + ATP = (3R)-3-methyl-D-ornithyl-N(6)-L-lysine + ADP + phosphate + H(+). Its pathway is amino-acid biosynthesis; L-pyrrolysine biosynthesis. In terms of biological role, is required for the biosynthesis of pyrrolysine. Catalyzes the ATP-dependent ligation between (3R)-3-methyl-D-ornithine and L-lysine, leading to (3R)-3-methyl-D-ornithyl-N6-L-lysine. Is also involved in the synthesis of pyrroline-carboxy-lysine (Pcl), a demethylated form of pyrrolysine that is generated by the pyrrolysine biosynthetic enzymes when the growth media is supplemented with D-ornithine. The chain is 3-methyl-D-ornithine--L-lysine ligase from Methanosarcina mazei (strain ATCC BAA-159 / DSM 3647 / Goe1 / Go1 / JCM 11833 / OCM 88) (Methanosarcina frisia).